Here is a 242-residue protein sequence, read N- to C-terminus: EFLNSSVKIVNPIMGVKFWDENVRIPAEEVTVRFERGHPVALNGQTFSDDVELLLEANRIGGRHGLGMSDQIENRIIEAKSRGIYEAPGMALLHIAYERLVTGIHNEDTIEQYHAHGRQLGRLLYQGRWFDPQALMLRDALQRWVASEITGEVTLELRRGNDYSILNTVSDNLTYKPERLTMEKGESVFSPDDRIGQLTMRNLDITDTREKLFNYVESGLISSGNAGLPQVANPLLQDKSAK.

The protein belongs to the argininosuccinate synthase family. Type 2 subfamily. Homotetramer.

The protein localises to the cytoplasm. It carries out the reaction L-citrulline + L-aspartate + ATP = 2-(N(omega)-L-arginino)succinate + AMP + diphosphate + H(+). It functions in the pathway amino-acid biosynthesis; L-arginine biosynthesis; L-arginine from L-ornithine and carbamoyl phosphate: step 2/3. This chain is Argininosuccinate synthase (argG), found in Dickeya chrysanthemi (Pectobacterium chrysanthemi).